The primary structure comprises 130 residues: Small ribosomal subunit protein uS11 (130 aa).

The protein belongs to the universal ribosomal protein uS11 family. As to quaternary structure, part of the 30S ribosomal subunit. Interacts with proteins S7 and S18. Binds to IF-3.

Functionally, located on the platform of the 30S subunit, it bridges several disparate RNA helices of the 16S rRNA. Forms part of the Shine-Dalgarno cleft in the 70S ribosome. This chain is Small ribosomal subunit protein uS11, found in Shewanella halifaxensis (strain HAW-EB4).